The primary structure comprises 561 residues: Sperm-tail PG-rich repeat-containing protein 2 (561 aa).

STPGR repeat units follow at residues 21–34, 63–72, and 97–104; these read VGPGTYQVPFPKQQ, PGPAHYNVSQ, and GPGPGSYN. A disordered region spans residues 123-143; sequence PAVSRNIDIPSIPSSGKSHGY. STPGR repeat units follow at residues 164–191, 200–210, 250–285, 292–299, 334–367, 421–438, and 471–481; these read GPAYYNPQFDYPKASLKYKGVNFGNATG, GPGPGQYDIIQ, PGPGKYNIKSEFDMIKSMSALVNSPSFIFFSETERF, TPAPGTYN, LPGPGFYDISTNIVKAQVKKPCLKKQPKTGFGSS, LPAPGRYDVQKSYDMSQV, and GPGPATYSPVL.

This is Sperm-tail PG-rich repeat-containing protein 2 (Stpg2) from Mus musculus (Mouse).